The following is a 751-amino-acid chain: Palmitoyltransferase ZDHHC8B (751 aa).

Residues 1 to 13 (MPNSVGKRFKPTK) are Cytoplasmic-facing. Residues 14-34 (YIPVSTAATLLVGSTTLFFVF) traverse the membrane as a helical segment. The Extracellular portion of the chain corresponds to 35–41 (TCPWLTK). The helical transmembrane segment at 42-62 (AVSPVVPLYNGIVFLFVLANF) threads the bilayer. At 63–148 (SMATFMDPGV…NCIGRRNYRY (86 aa)) the chain is on the cytoplasmic side. Residues 104–154 (KWCATCHFYRPPRCSHCSVCDNCVEEFDHHCPWVNNCIGRRNYRYFFLFLL) form the DHHC domain. C134 serves as the catalytic S-palmitoyl cysteine intermediate. The chain crosses the membrane as a helical span at residues 149–169 (FFLFLLSLSVHMVGVFSFGLL). Residues 170-185 (FVLHHLETLSALHTTV) are Extracellular-facing. Residues 186–206 (TLVVMCVTGLFFIPVMGLTGF) traverse the membrane as a helical segment. Residues 207 to 751 (HMVLVARGRT…VGGTTYEISV (545 aa)) lie on the Cytoplasmic side of the membrane. Disordered regions lie at residues 293–346 (RSKS…PSTP), 437–461 (CTPLGGTKHETITSTPHRGVFSPGT), 633–659 (RSSASSLVRAPRTSTTSLHTDGGGMNR), 666–685 (RSPVHQSHQSPTSVPRSPSY), and 703–736 (HLGTREDIGQGKVNGQLKGQYGTPSGTPSRHTSV). Positions 326–338 (SQLTSSEESSLSS) are enriched in low complexity. 3 stretches are compositionally biased toward polar residues: residues 633–651 (RSSASSLVRAPRTSTTSLH), 669–681 (VHQSHQSPTSVPR), and 724–733 (GTPSGTPSRH).

This sequence belongs to the DHHC palmitoyltransferase family. ERF2/ZDHHC9 subfamily.

It localises to the golgi apparatus membrane. The protein resides in the mitochondrion membrane. It carries out the reaction L-cysteinyl-[protein] + hexadecanoyl-CoA = S-hexadecanoyl-L-cysteinyl-[protein] + CoA. Its function is as follows. Palmitoyltransferase that catalyzes the addition of palmitate onto various protein substrates and therefore function in several unrelated biological processes. This Danio rerio (Zebrafish) protein is Palmitoyltransferase ZDHHC8B.